Here is a 618-residue protein sequence, read N- to C-terminus: Transcriptional regulator CPUR_05421 (618 aa).

Residues 14 to 41 constitute a DNA-binding region (zn(2)-C6 fungal-type); that stretch reads CSHLVGREIGCSRDLAGCRRCTSEGRAC. Residues 52–87 are disordered; it reads TRRRNRANQDVTRSALYSSNTTPQTISDQATGRPCE. Over residues 59–81 the composition is skewed to polar residues; that stretch reads NQDVTRSALYSSNTTPQTISDQA.

It localises to the nucleus. Transcriptional regulator; part of the ergochrome gene cluster responsible for the typical purple-black color of the ergot sclerotia. The ergochrome gene cluster produces several ergot pigments including the yellow ergochrome secalonic acid and its derivatives, as well as the red anthraquinones endocrocin and clavorubin. In Claviceps purpurea (strain 20.1) (Ergot fungus), this protein is Transcriptional regulator CPUR_05421.